Here is an 836-residue protein sequence, read N- to C-terminus: Protein O-mannosyl-transferase TMTC2 (836 aa).

A helical transmembrane segment spans residues 1-21 (MIAELVSSALGLALYLNTLSA). At 22 to 77 (DFCYDDSRAIKTNQDLLPETPWTHIFYNDFWGTLLTHSGSHKSYRPLCTLSFRLNH) the chain is on the extracellular side. A helical membrane pass occupies residues 78 to 98 (AIGGLNPWSYHLVNVLLHAAV). The Cytoplasmic portion of the chain corresponds to 99–107 (TGLFTRFSK). The chain crosses the membrane as a helical span at residues 108–128 (ALLGDGYWTFMAGLMFASHPI). At 129–132 (HTEA) the chain is on the extracellular side. The helical transmembrane segment at 133–153 (VAGIVGRADVGASLFFLLSLL) threads the bilayer. Residues 154 to 168 (CYIKHCSTRGYSART) are Cytoplasmic-facing. Helical transmembrane passes span 169-184 (WGWFLGTGLCAGCSML) and 185-204 (WKEQGVTVLAVSAVYDVFVF). Topologically, residues 205 to 220 (HRLKMKQILPTIYKRK) are cytoplasmic. A helical transmembrane segment spans residues 221–241 (NLSLFLSISLLTFWGTCLLGA). Topologically, residues 242-312 (RLYWMGNKPP…KTVCDWRNLH (71 aa)) are extracellular. The helical transmembrane segment at 313-333 (TVAFYSGLLLLAYCGLKNPSL) threads the bilayer. At 334–392 (EGECNGKALTNGKQNANGHSCHSDVEYRNSEMKPSFASKVENGIKNCVPQRTQLPSTEN) the chain is on the cytoplasmic side. A helical transmembrane segment spans residues 393–415 (IVILSLSLLIIPFIPATNLFFYV). At 416-422 (GFVIAER) the chain is on the extracellular side. Residues 423–443 (VLYIPSMGFCLLITVGARALY) form a helical membrane-spanning segment. At 444–449 (VKVQKR) the chain is on the cytoplasmic side. The chain crosses the membrane as a helical span at residues 450 to 470 (FLKSLVFYATATLIVFYGVKT). Over 471 to 836 (AIRNGDWQNE…EKQGLKTSKT (366 aa)) the chain is Extracellular. TPR repeat units lie at residues 493-526 (AKAWGNLGNVLKSQSKISEAESAYRNALFYRSNM), 527-560 (ADMLYNLGLLLQENSRFAEALHYYKLAIGSRPTL), 561-594 (ASAYLNTGIILMNQGKTEEARRTFLKCSEIPDEN), 606-639 (TSCLYNLGKLYHEQGRYEEALSVYREAIQKMPRH), 643-676 (QSLYNMMGEAYMRLSKLPEAEHWYMESLRSKTDH), 677-710 (IPAHLTYGKLLALTGRKSEAEKFFLKAIELDPTK), 711-744 (GNCYMHYGQFLLEESRLTEAAEMAKKAAELDNTE), 745-778 (FDVVFNAAHMLRQASLNEAAEKYYDLAARLRPNY), and 779-812 (PAALMNLGAILHLNGRLQKAEANYLRALQLKPDD).

It belongs to the TMTC family.

The protein localises to the membrane. It localises to the endoplasmic reticulum. The enzyme catalyses a di-trans,poly-cis-dolichyl beta-D-mannosyl phosphate + L-seryl-[protein] = 3-O-(alpha-D-mannosyl)-L-seryl-[protein] + a di-trans,poly-cis-dolichyl phosphate + H(+). It catalyses the reaction a di-trans,poly-cis-dolichyl beta-D-mannosyl phosphate + L-threonyl-[protein] = 3-O-(alpha-D-mannosyl)-L-threonyl-[protein] + a di-trans,poly-cis-dolichyl phosphate + H(+). Its pathway is protein modification; protein glycosylation. In terms of biological role, transfers mannosyl residues to the hydroxyl group of serine or threonine residues. The 4 members of the TMTC family are O-mannosyl-transferases dedicated primarily to the cadherin superfamily, each member seems to have a distinct role in decorating the cadherin domains with O-linked mannose glycans at specific regions. Also acts as O-mannosyl-transferase on other proteins such as PDIA3. This is Protein O-mannosyl-transferase TMTC2 from Mus musculus (Mouse).